Consider the following 555-residue polypeptide: Energy-dependent translational throttle protein EttA (555 aa).

2 ABC transporter domains span residues 6 to 259 (YTMH…AQEA) and 324 to 550 (LEVS…RIKY). 39-46 (GLNGAGKS) is an ATP binding site. Residues 95-139 (SEVVNALKRLDEVYALYADPDADFDKLAAEQGRLEEIIQAHDGHN) form an arm region. The interval 242-322 (GNYSSWLEQK…IPPGPRLGDK (81 aa)) is ptIM. Position 356–363 (356–363 (GPNGAGKS)) interacts with ATP.

Belongs to the ABC transporter superfamily. ABCF family. Translational throttle EttA subfamily. Monomer. Probably contacts ribosomal proteins L1, L5, L33 and S7, the 16S and 23S rRNA and the P-site containing tRNA(fMet).

Its subcellular location is the cytoplasm. The enzyme catalyses ATP + H2O = ADP + phosphate + H(+). Its function is as follows. A translation factor that gates the progression of the 70S ribosomal initiation complex (IC, containing tRNA(fMet) in the P-site) into the translation elongation cycle by using a mechanism sensitive to the ATP/ADP ratio. Binds to the 70S ribosome E-site where it modulates the state of the translating ribosome during subunit translocation. ATP hydrolysis probably frees it from the ribosome, which can enter the elongation phase. This chain is Energy-dependent translational throttle protein EttA, found in Escherichia coli O157:H7.